The chain runs to 80 residues: MAPSRRMVASAFLLLAILVATEMGTTKVAEARHCLSQSHRFKGMCVSSNNCANVCRTESFPDGECKSHGLERKCFCKKVC.

A signal peptide spans 1-31 (MAPSRRMVASAFLLLAILVATEMGTTKVAEA). 4 disulfide bridges follow: cysteine 34/cysteine 80, cysteine 45/cysteine 65, cysteine 51/cysteine 74, and cysteine 55/cysteine 76.

The protein belongs to the DEFL family. Expressed preferentially in root exodermis and xylem parenchyma cells in vasculature of root and flag leaf sheath.

The protein resides in the secreted. The protein localises to the extracellular space. Plant defensin-like protein involved in accumulation of cadmium (Cd) in rice leaves. Mediates Cd efflux from cytosol into extracellular spaces via chelation. This drives Cd secretion from xylem parenchyma cells into the xylem vessels, hence lowering Cd levels in cytosol meanwhile promoting Cd translocation from roots to shoots. The sequence is that of Defensin-like protein CAL1 from Oryza sativa subsp. japonica (Rice).